The following is a 383-amino-acid chain: Putative glutamate--cysteine ligase 2-1 (383 aa).

The protein belongs to the glutamate--cysteine ligase type 2 family. YbdK subfamily.

The enzyme catalyses L-cysteine + L-glutamate + ATP = gamma-L-glutamyl-L-cysteine + ADP + phosphate + H(+). Its function is as follows. ATP-dependent carboxylate-amine ligase which exhibits weak glutamate--cysteine ligase activity. This is Putative glutamate--cysteine ligase 2-1 from Legionella pneumophila (strain Corby).